The sequence spans 477 residues: Glycogen synthase (477 aa).

K15 is an ADP-alpha-D-glucose binding site.

Belongs to the glycosyltransferase 1 family. Bacterial/plant glycogen synthase subfamily.

The enzyme catalyses [(1-&gt;4)-alpha-D-glucosyl](n) + ADP-alpha-D-glucose = [(1-&gt;4)-alpha-D-glucosyl](n+1) + ADP + H(+). It participates in glycan biosynthesis; glycogen biosynthesis. Functionally, synthesizes alpha-1,4-glucan chains using ADP-glucose. This is Glycogen synthase (glgA) from Salmonella typhimurium (strain LT2 / SGSC1412 / ATCC 700720).